The primary structure comprises 409 residues: MQQPNKLTPFFENLNFERDDNTMVINFGPQHPSAHGQLRLVLELEGEQVVKAYPDIGYLHRGIEKMAENMTYNEFLPTTDRLDYIASTANNYAYALAVEKLLGIEAPRRAQVIRTMLLEINRLISHLFFIATHALDVGAMSVFLYAFREREFGMDLMEDYCGARLTHSAVRIGGVPLDLPNGWIEKMISWCDKVDHELEHTYNALLQENRIWKMRLEDVGVISAEDALSWGCTGPMLRGSGVNWDIRKEEPYELYGELDFDIPVSDRCDSYGRYRLYMEEMHQSTRILRQLVSKYKESEPQLMAHAPQYISAPKEEIMTQNYALMQHFVLVTQGMRPPKGEVYVPTESPKGELGFYIKSEGEPYAYRLKCRAPSFFHTGLLQEILVGTYIADVVTIIGSTNIVFGEVDR.

The protein belongs to the complex I 49 kDa subunit family. NDH-1 is composed of 14 different subunits. Subunits NuoB, C, D, E, F, and G constitute the peripheral sector of the complex.

It is found in the cell inner membrane. It carries out the reaction a quinone + NADH + 5 H(+)(in) = a quinol + NAD(+) + 4 H(+)(out). Its function is as follows. NDH-1 shuttles electrons from NADH, via FMN and iron-sulfur (Fe-S) centers, to quinones in the respiratory chain. The immediate electron acceptor for the enzyme in this species is believed to be ubiquinone. Couples the redox reaction to proton translocation (for every two electrons transferred, four hydrogen ions are translocated across the cytoplasmic membrane), and thus conserves the redox energy in a proton gradient. This is NADH-quinone oxidoreductase subunit D from Sulfurovum sp. (strain NBC37-1).